Here is a 402-residue protein sequence, read N- to C-terminus: Ubiquitin-like modifier-activating enzyme 5 (402 aa).

ATP contacts are provided by G81, D102, K125, N148, and N182. Residues C224 and C227 each contribute to the Zn(2+) site. The active-site Glycyl thioester intermediate is C248. Positions 301 and 306 each coordinate Zn(2+). The tract at residues 369–402 (EAPEKSSETSEETVTTAPPDDASLEDLMAQMKSM) is disordered.

Belongs to the ubiquitin-activating E1 family. UBA5 subfamily.

Functionally, E1-like enzyme which activates UFM1. This Drosophila erecta (Fruit fly) protein is Ubiquitin-like modifier-activating enzyme 5.